We begin with the raw amino-acid sequence, 152 residues long: 6,7-dimethyl-8-ribityllumazine synthase (152 aa).

5-amino-6-(D-ribitylamino)uracil-binding positions include Phe-21, 55–57 (AFE), and 79–81 (AVI). Residue 84 to 85 (AT) coordinates (2S)-2-hydroxy-3-oxobutyl phosphate. The active-site Proton donor is His-87. Phe-112 is a 5-amino-6-(D-ribitylamino)uracil binding site. Arg-126 contributes to the (2S)-2-hydroxy-3-oxobutyl phosphate binding site.

Belongs to the DMRL synthase family. Forms an icosahedral capsid composed of 60 subunits, arranged as a dodecamer of pentamers.

The enzyme catalyses (2S)-2-hydroxy-3-oxobutyl phosphate + 5-amino-6-(D-ribitylamino)uracil = 6,7-dimethyl-8-(1-D-ribityl)lumazine + phosphate + 2 H2O + H(+). The protein operates within cofactor biosynthesis; riboflavin biosynthesis; riboflavin from 2-hydroxy-3-oxobutyl phosphate and 5-amino-6-(D-ribitylamino)uracil: step 1/2. Its function is as follows. Catalyzes the formation of 6,7-dimethyl-8-ribityllumazine by condensation of 5-amino-6-(D-ribitylamino)uracil with 3,4-dihydroxy-2-butanone 4-phosphate. This is the penultimate step in the biosynthesis of riboflavin. This chain is 6,7-dimethyl-8-ribityllumazine synthase, found in Exiguobacterium sibiricum (strain DSM 17290 / CCUG 55495 / CIP 109462 / JCM 13490 / 255-15).